The primary structure comprises 275 residues: Probable aquaporin NIP7-1 (275 aa).

Residues 1 to 11 (MNGEARSRVVD) show a composition bias toward basic and acidic residues. Positions 1 to 26 (MNGEARSRVVDQEAGSTPSTLRDEDH) are disordered. 2 helical membrane passes run 47–67 (IVMA…GVIS) and 76–96 (VGLL…VYSI). The NPA 1 signature appears at 105 to 107 (NPS). The next 3 membrane-spanning stretches (helical) occupy residues 127–147 (ITAQ…VYGV), 161–181 (VSAF…ASAL), and 192–212 (LTGF…GPIS). An NPA 2 motif is present at residues 217-219 (NPA). A helical membrane pass occupies residues 231–251 (FEDLWIYMTAPVIGAIIGVLT). The residue at position 272 (Ser-272) is a Phosphoserine.

It belongs to the MIP/aquaporin (TC 1.A.8) family. NIP (TC 1.A.8.12) subfamily. In terms of tissue distribution, expressed in floral buds.

The protein localises to the membrane. Functionally, aquaporins facilitate the transport of water and small neutral solutes across cell membranes. In Arabidopsis thaliana (Mouse-ear cress), this protein is Probable aquaporin NIP7-1 (NIP7-1).